We begin with the raw amino-acid sequence, 464 residues long: Phospho-cellobiase (464 aa).

The active-site Proton donor is the glutamate 172. Catalysis depends on glutamate 361, which acts as the Nucleophile.

Belongs to the glycosyl hydrolase 1 family.

The polypeptide is Phospho-cellobiase (casB) (Klebsiella oxytoca).